Reading from the N-terminus, the 60-residue chain is Homeobox protein engrailed-like (60 aa).

Positions 1 to 41 (GEQLCRLRAEFQASRYLTEERRTALARELRLNEAQIKIWFQ) form a DNA-binding region, homeobox.

Belongs to the engrailed homeobox family.

It is found in the nucleus. The protein is Homeobox protein engrailed-like of Lampetra planeri (Brook lamprey).